A 587-amino-acid polypeptide reads, in one-letter code: MSMVDEPLYPIAVLIDELKNDDIQRRLNSIKRLSIIARALGEERTRKELIPFLSENNDDDDEVLLAMAEELGGFILYVGGVEYAYVLLPPLETLSTVEETCVREKAVDSLCRIGAQMRESDLVEHFTPLAKRLSAGEWFTARVSACGIFHIAYPSAPDVLKTELRSIYGQLCQDDMPMVRRAAATNLGKFAATIESAHLKTDIMSMFEDLTQDDQDSVRLLAVEGCAALGKLLEPQDCVAHILPVIVNFSQDKSWRVRYMVANQLYELCEAVGPEPTRTDLVPAYARLLCDNEAEVRIAAAGKVTKFCRILNPELAIQHILPCVKELSSDSSQHVRSALASVIMGMAPVLGKDATIEHLLPIFLSLLKDEFPDVRLNIISKLDQVNQVIGIDLLSQSLLPAIVELAEDRHWRVRLAIIEYIPLLASQLGVGFFDEKLGALCMQWLQDKVHSIREAAANNLKRLAEEFGPEWAMQHIVPQVLEMINNPHYLYRMTILRAVSLLAPVMGSEITCSKLLPAVITASKDRVPNIKFNVAKMMQSLIPIVDQAVVENMIRPCLVELSEDPDVDVRYFANQALQSIDNVMMSS.

Ser2 bears the N-acetylserine mark. HEAT repeat units lie at residues 2–42 (SMVD…ALGE), 44–80 (RTRK…YVGG), 81–119 (VEYA…QMRE), 158–194 (DVLK…AATI), 197–235 (AHLK…LLEP), 236–274 (QDCV…AVGP), 276–313 (PTRT…ILNP), 314–352 (ELAI…VLGK), 353–391 (DATI…VIGI), 393–430 (LLSQ…QLGV), 432–469 (FFDE…EFGP), 470–508 (EWAM…VMGS), 509–547 (EITC…IVDQ), and 549–586 (VVEN…VMMS).

It belongs to the phosphatase 2A regulatory subunit A family. As to quaternary structure, PP2A consists of a common heterodimeric core enzyme, composed of a 36 kDa catalytic subunit (subunit C) and a 65 kDa constant regulatory subunit (subunit A), that associates with a variety of regulatory subunits such as subunits B (the R2/B/PR55/B55, R3/B''/PR72/PR130/PR59 and R5/B'/B56 families). Interacts with CHIP. Interacts with SRK2E/OST1. Ubiquitinated. CHIP-mediated ubiquitination enhances phosphatase activity after an abiotic stress such as low temperature or darkness. As to expression, expressed ubiquitously at stable levels. However, higher protein levels in roots and flowers (at protein level).

The protein resides in the cytoplasm. It localises to the cytosol. The protein localises to the nucleus. The A subunit of protein phosphatase 2A serves as a scaffolding molecule to coordinate the assembly of the catalytic subunit and a variable regulatory B subunit. Involved during developmental process such as seedling and floral developments. Seems to act as a negative regulator of PP2A catalytic activity. The chain is Serine/threonine-protein phosphatase 2A 65 kDa regulatory subunit A gamma isoform (PP2AA3) from Arabidopsis thaliana (Mouse-ear cress).